Consider the following 351-residue polypeptide: Putative NBPF family member NBPF5 (351 aa).

2 coiled-coil regions span residues 10-43 (SERAEMNILEINQELRSQLAESNQQFRDLKEKFL) and 69-115 (DSVL…KLRE). Residues 157–285 (HLVHKLSPEN…VPPRHHDKSN (129 aa)) form a disordered region. Over residues 165–179 (ENDEDEDEDEDDKDE) the composition is skewed to acidic residues. An Olduvai domain is found at 174 to 261 (EDDKDEEVEK…EEEEALNIPP (88 aa)). A compositionally biased stretch (basic and acidic residues) spans 192-202 (EVQKTEEKEVP). Residues 214-226 (SNSHNPSNSNQPH) show a composition bias toward low complexity. Composition is skewed to basic and acidic residues over residues 232-251 (TFKEHEVDSALVVESEHPHD) and 264-273 (QNDHEEEEGK).

It belongs to the NBPF family. In terms of tissue distribution, expressed in brain and medulla.

Its subcellular location is the cytoplasm. The protein is Putative NBPF family member NBPF5 of Homo sapiens (Human).